We begin with the raw amino-acid sequence, 578 residues long: Longifolene synthase (578 aa).

Mg(2+) contacts are provided by Asp331, Asp335, and Asp475. Positions Asp331–Asp335 match the DDXXD motif motif.

Belongs to the terpene synthase family. Tpsd subfamily. Mg(2+) serves as cofactor. It depends on Mn(2+) as a cofactor.

It catalyses the reaction (2E,6E)-farnesyl diphosphate = longifolene + diphosphate. Its pathway is sesquiterpene biosynthesis. It participates in terpene metabolism; oleoresin biosynthesis. In terms of biological role, terpene synthase (TPS) involved in the biosynthesis of sesquiterpene natural products included in conifer oleoresin secretions and volatile emissions; these compounds contribute to biotic and abiotic stress defense against herbivores and pathogens. Catalyzes the conversion of (2E,6E)-farnesyl diphosphate (FPP) to longifolene. The polypeptide is Longifolene synthase (Picea engelmannii x Picea glauca (Hybrid white spruce)).